Reading from the N-terminus, the 281-residue chain is Predicted GPI-anchored protein 39 (281 aa).

The first 18 residues, 1–18 (MKATTFTLLLSIATAINA), serve as a signal peptide directing secretion. Disordered stretches follow at residues 52–94 (HHHG…SASV) and 106–227 (VSVS…SSSE). 4 stretches are compositionally biased toward low complexity: residues 69–94 (SSSS…SASV), 106–158 (VSVS…STTD), 167–203 (ATDS…IEET), and 210–227 (SVPS…SSSE). Asn150 is a glycosylation site (N-linked (GlcNAc...) asparagine). 4 N-linked (GlcNAc...) asparagine glycosylation sites follow: Asn239, Asn246, Asn249, and Asn252. Ser256 carries GPI-anchor amidated serine lipidation. Residues 257 to 281 (ANFAIQYGTDYGVAVVAAIVGALLI) constitute a propeptide, removed in mature form.

It is found in the cell membrane. The protein is Predicted GPI-anchored protein 39 (PGA39) of Candida albicans (strain SC5314 / ATCC MYA-2876) (Yeast).